The sequence spans 236 residues: MNTTPDTPTPRALRELTPLEARILGVLVEKQHTVPDTYPLSLNALTAGCNQKTARSPVMNVSEDEVTTALDELKRLSLVMEGSSSRVPRFEHNMNRVLGIPSQAIALLTILLLRGPQTAAELRLNSARLHGFADISSVEAFLDELAARAQPLVVRLPRAPGARENRWMHLMCGEVNMADFASADAGGGADSVPPSEFEALKAEQKRLADEVARLNALVQRMASELGIDVDAPGDAS.

It belongs to the UPF0502 family.

The protein is UPF0502 protein Bcenmc03_4618 of Burkholderia orbicola (strain MC0-3).